The chain runs to 65 residues: Large ribosomal subunit protein bL35 (65 aa).

The disordered stretch occupies residues 1-26 (MPKIKTLRGAAKRFKKTASGGFKRKQ). A compositionally biased stretch (basic residues) spans 10 to 26 (AAKRFKKTASGGFKRKQ).

The protein belongs to the bacterial ribosomal protein bL35 family.

The sequence is that of Large ribosomal subunit protein bL35 from Histophilus somni (strain 2336) (Haemophilus somnus).